Consider the following 1184-residue polypeptide: C5a peptidase (1184 aa).

The N-terminal stretch at 1 to 31 (MRKKQKLPFDKLAIALMSTSILLNAQSDIKA) is a signal peptide. Composition is skewed to polar residues over residues 33 to 52 (TVTE…QPTA) and 89 to 100 (AKTTDTPATSKA). A disordered region spans residues 33–117 (TVTEDTPATE…PSQVKTLQEK (85 aa)). A Peptidase S8 domain is found at 99 to 581 (KATIRDLNDP…AGAVDAKKAS (483 aa)). Active-site charge relay system residues include Asp130, His193, and Ser512. Composition is skewed to basic and acidic residues over residues 1029–1054 (EGHS…KPEQ), 1061–1071 (PDKKPETKPEQ), 1078–1088 (PDKKPEAKPEQ), and 1095–1107 (PDKK…EKDS). Positions 1029–1150 (EGHSNKPEQD…RDQLPTTNDK (122 aa)) are disordered. 4 consecutive repeat copies span residues 1034-1067 (KPEQ…KPET), 1068-1084 (KPEQ…KPEA), 1085-1101 (KPEQ…KPET), and 1102-1118 (KPEK…TPQK). Residues 1034-1118 (KPEQDGSDQV…GQTPGKTPQK (85 aa)) form a 4 X 17 AA tandem repeats region. Polar residues predominate over residues 1109-1123 (GQTPGKTPQKGQPSR). The LPXTG sorting signal motif lies at 1144-1148 (LPTTN). Thr1147 carries the pentaglycyl murein peptidoglycan amidated threonine modification. A propeptide spans 1148-1184 (NDKDTNRLHLLKLVMTTFFFGLVAHIFKTKRQKETKK) (removed by sortase).

Belongs to the peptidase S8 family. Post-translationally, cleaved by SpeB protease; leading to its degradation. Degradation by SpeB is probably strictly regulated to preserve integrity of C5a peptidase.

The protein resides in the secreted. It is found in the cell wall. It catalyses the reaction The primary cleavage site is at 67-His-|-Lys-68 in human C5a with a minor secondary cleavage site at 58-Ala-|-Ser-59.. Its function is as follows. This virulence factor of S.pyogenes specifically cleaves the human serum chemotaxin C5a at '68-Lys-|-Asp-69' bond near its C-terminus, destroying its ability to serve as a chemoattractant. This Streptococcus pyogenes serotype M6 (strain ATCC BAA-946 / MGAS10394) protein is C5a peptidase (scpA).